Reading from the N-terminus, the 283-residue chain is Bifunctional protein FolD (283 aa).

NADP(+)-binding positions include 165-167 (GRS), Ser190, and Thr231.

It belongs to the tetrahydrofolate dehydrogenase/cyclohydrolase family. As to quaternary structure, homodimer.

It catalyses the reaction (6R)-5,10-methylene-5,6,7,8-tetrahydrofolate + NADP(+) = (6R)-5,10-methenyltetrahydrofolate + NADPH. The enzyme catalyses (6R)-5,10-methenyltetrahydrofolate + H2O = (6R)-10-formyltetrahydrofolate + H(+). It functions in the pathway one-carbon metabolism; tetrahydrofolate interconversion. Its function is as follows. Catalyzes the oxidation of 5,10-methylenetetrahydrofolate to 5,10-methenyltetrahydrofolate and then the hydrolysis of 5,10-methenyltetrahydrofolate to 10-formyltetrahydrofolate. This chain is Bifunctional protein FolD, found in Nocardia farcinica (strain IFM 10152).